Here is an 81-residue protein sequence, read N- to C-terminus: Mipartoxin-1A (81 aa).

A signal peptide spans 1 to 21; the sequence is MKTLLLTLVVVTIVCLDLGNS. Disulfide bonds link Cys-24–Cys-42, Cys-35–Cys-61, Cys-65–Cys-73, and Cys-74–Cys-79.

The protein belongs to the three-finger toxin family. Short-chain subfamily. Expressed by the venom gland.

Its subcellular location is the secreted. In terms of biological role, snake venom neurotoxin that blocks neuromuscular transmission, presenting a postsynaptic action through the nicotinic acetylcholine receptor (nAChR). Has no cytotoxic activity. This Micrurus mipartitus (Red-tailed coral snake) protein is Mipartoxin-1A.